The following is a 493-amino-acid chain: Cytochrome P450 2W1 (493 aa).

A signal peptide spans 1 to 23 (MALLLLGVWGILLLLGLWGLLQG). An N-linked (GlcNAc...) asparagine glycan is attached at Asn-180. Cys-436 is a heme binding site.

This sequence belongs to the cytochrome P450 family. Requires heme as cofactor. In terms of tissue distribution, detected in colon, ileum, and testes.

The protein localises to the endoplasmic reticulum lumen. The protein resides in the cell membrane. It localises to the microsome membrane. The enzyme catalyses all-trans-retinoate + reduced [NADPH--hemoprotein reductase] + O2 = all-trans-4-hydroxyretinoate + oxidized [NADPH--hemoprotein reductase] + H2O + H(+). It catalyses the reaction 1-(9Z-octadecenoyl)-sn-glycero-3-phosphocholine + reduced [NADPH--hemoprotein reductase] + O2 = 1-[8-hydroxy-(9Z)-octadecenoyl]-sn-glycero-3-phosphocholine + oxidized [NADPH--hemoprotein reductase] + H2O + H(+). The catalysed reaction is 1-(9Z-octadecenoyl)-sn-glycero-3-phosphocholine + reduced [NADPH--hemoprotein reductase] + O2 = 1-[11-hydroxy-(9Z)-octadecenoyl]-sn-glycero-3-phosphocholine + oxidized [NADPH--hemoprotein reductase] + H2O + H(+). It carries out the reaction 1-(9Z-octadecenoyl)-sn-glycero-3-phosphocholine + reduced [NADPH--hemoprotein reductase] + O2 = 1-[(9S,10R)-epoxy-octadecanoyl]-sn-glycero-3-phosphocholine + oxidized [NADPH--hemoprotein reductase] + H2O + H(+). The enzyme catalyses 1-(9Z-octadecenoyl)-sn-glycero-3-phosphocholine + reduced [NADPH--hemoprotein reductase] + O2 = 1-[(9R,10S)-epoxy-octadecanoyl]-sn-glycero-3-phosphocholine + oxidized [NADPH--hemoprotein reductase] + H2O + H(+). Functionally, a cytochrome P450 monooxygenase that may play a role in retinoid and phospholipid metabolism. Catalyzes the hydroxylation of saturated carbon hydrogen bonds. Hydroxylates all trans-retinoic acid (atRA) to 4-hydroxyretinoate and may regulate atRA clearance. Other retinoids such as all-trans retinol and all-trans retinal are potential endogenous substrates. Catalyzes both epoxidation of double bonds and hydroxylation of carbon hydrogen bonds of the fatty acyl chain of 1-acylphospholipids/2-lysophospholipids. Can metabolize various lysophospholipids classes including lysophosphatidylcholines (LPCs), lysophosphatidylinositols (LPIs), lysophosphatidylserines (LPSs), lysophosphatidylglycerols (LPGs), lysophosphatidylethanolamines (LPEs) and lysophosphatidic acids (LPAs). Has low or no activity toward 2-acylphospholipids/1-lysophospholipids, diacylphospholipids and free fatty acids. May play a role in tumorigenesis by activating procarcinogens such as aflatoxin B1, polycyclic aromatic hydrocarbon dihydrodiols and aromatic amines. Mechanistically, uses molecular oxygen inserting one oxygen atom into a substrate, and reducing the second into a water molecule, with two electrons provided by NADPH via cytochrome P450 reductase (CPR; NADPH-ferrihemoprotein reductase). The polypeptide is Cytochrome P450 2W1 (Cyp2w1) (Mus musculus (Mouse)).